A 313-amino-acid chain; its full sequence is Proclavaminate amidinohydrolase (313 aa).

6 residues coordinate Mn(2+): histidine 121, aspartate 144, histidine 146, aspartate 148, aspartate 235, and aspartate 237.

It belongs to the arginase family. In terms of assembly, homohexamer. It depends on Mn(2+) as a cofactor.

The enzyme catalyses amidinoproclavaminate + H2O = proclavaminate + urea. It functions in the pathway antibiotic biosynthesis; clavulanate biosynthesis; clavulanate from D-glyceraldehyde 3-phosphate and L-arginine: step 4/8. This is Proclavaminate amidinohydrolase (pah) from Streptomyces clavuligerus.